Consider the following 295-residue polypeptide: Small ribosomal subunit biogenesis GTPase RsgA (295 aa).

The CP-type G domain maps to 68–228; the sequence is KNLLTKPHVA…VVDTPGFANL (161 aa). GTP-binding positions include 117-120 and 170-178; these read NKMD and GLSGVGKSS. Zn(2+) is bound by residues cysteine 250, cysteine 255, histidine 257, and cysteine 263.

The protein belongs to the TRAFAC class YlqF/YawG GTPase family. RsgA subfamily. Monomer. Associates with 30S ribosomal subunit, binds 16S rRNA. The cofactor is Zn(2+).

Its subcellular location is the cytoplasm. Its function is as follows. One of several proteins that assist in the late maturation steps of the functional core of the 30S ribosomal subunit. Helps release RbfA from mature subunits. May play a role in the assembly of ribosomal proteins into the subunit. Circularly permuted GTPase that catalyzes slow GTP hydrolysis, GTPase activity is stimulated by the 30S ribosomal subunit. The polypeptide is Small ribosomal subunit biogenesis GTPase RsgA (Thermotoga petrophila (strain ATCC BAA-488 / DSM 13995 / JCM 10881 / RKU-1)).